The following is a 58-amino-acid chain: MLRWALIFFIIAIIAAVFGFGGIATAAAGIAKILFYLFLVVAVVMLVSALLAGRNITR.

Helical transmembrane passes span 4–24 (WALIFFIIAIIAAVFGFGGIA) and 33–53 (ILFYLFLVVAVVMLVSALLAG).

The protein belongs to the UPF0391 family.

The protein localises to the cell membrane. This is UPF0391 membrane protein Gbem_0127 from Citrifermentans bemidjiense (strain ATCC BAA-1014 / DSM 16622 / JCM 12645 / Bem) (Geobacter bemidjiensis).